The primary structure comprises 264 residues: Type III pantothenate kinase (264 aa).

ATP is bound at residue 6–13 (DIGNTQTV). Residues tyrosine 100 and 107-110 (GADR) each bind substrate. Catalysis depends on aspartate 109, which acts as the Proton acceptor. Position 129 (aspartate 129) interacts with K(+). Threonine 132 provides a ligand contact to ATP. Threonine 185 contributes to the substrate binding site.

This sequence belongs to the type III pantothenate kinase family. Homodimer. Requires NH4(+) as cofactor. It depends on K(+) as a cofactor.

Its subcellular location is the cytoplasm. The enzyme catalyses (R)-pantothenate + ATP = (R)-4'-phosphopantothenate + ADP + H(+). It participates in cofactor biosynthesis; coenzyme A biosynthesis; CoA from (R)-pantothenate: step 1/5. In terms of biological role, catalyzes the phosphorylation of pantothenate (Pan), the first step in CoA biosynthesis. In Rubrobacter xylanophilus (strain DSM 9941 / JCM 11954 / NBRC 16129 / PRD-1), this protein is Type III pantothenate kinase.